Here is a 394-residue protein sequence, read N- to C-terminus: Magnesium transporter MRS2-2 (394 aa).

The interval 115–145 (PVGNASHNGGQGDGKEIAGAQNDGDTGDEDE) is disordered. 2 helical membrane passes run 329-349 (LVLS…GIFG) and 366-386 (YVVG…MSYA). The short motif at 349–351 (GMN) is the Required for magnesium transport activity element.

It belongs to the CorA metal ion transporter (MIT) (TC 1.A.35.5) family. In terms of tissue distribution, expressed in the whole plant but preferentially in the mature anthers.

The protein localises to the membrane. Functionally, low-affinity magnesium transporter that mediates the influx of magnesium. Plays a crucial role in male gametophyte development and male fertility. The polypeptide is Magnesium transporter MRS2-2 (MRS2-2) (Arabidopsis thaliana (Mouse-ear cress)).